A 136-amino-acid chain; its full sequence is Large ribosomal subunit protein uL16 (136 aa).

This sequence belongs to the universal ribosomal protein uL16 family. Part of the 50S ribosomal subunit.

In terms of biological role, binds 23S rRNA and is also seen to make contacts with the A and possibly P site tRNAs. This is Large ribosomal subunit protein uL16 from Ehrlichia chaffeensis (strain ATCC CRL-10679 / Arkansas).